The following is a 191-amino-acid chain: Transcriptional regulator MET32 (191 aa).

Residues 70–96 (KKENALPKPPKSSKSKPQDRRNSTGEK) form a disordered region. Residues 85–96 (KPQDRRNSTGEK) are compositionally biased toward basic and acidic residues. The C2H2-type 1 zinc-finger motif lies at 98-120 (FKCAKCSLEFSRSSDLRRHEKTH). A C2H2-type 2; atypical zinc finger spans residues 126-150 (NICPQCGKGFARKDALKRHYDTLTC).

In terms of assembly, interacts with MET4 and MET28.

It is found in the cytoplasm. The protein resides in the nucleus. Functionally, auxiliary transcriptional regulator of sulfur amino acid metabolism. Involved in the transcriptional activation of MET28. This Saccharomyces cerevisiae (strain ATCC 204508 / S288c) (Baker's yeast) protein is Transcriptional regulator MET32 (MET32).